Consider the following 620-residue polypeptide: Acetylcholinesterase 1 (620 aa).

The first 31 residues, 1–31 (MRYSLLFFIFLPCVITAVDLIHLHDGSPLFG), serve as a signal peptide directing secretion. A glycan (N-linked (GlcNAc...) asparagine) is linked at Asn-74. A disulfide bridge links Cys-82 with Cys-109. Catalysis depends on Ser-216, which acts as the Acyl-ester intermediate. The cysteines at positions 270 and 286 are disulfide-linked. Residue Asn-272 is glycosylated (N-linked (GlcNAc...) asparagine). Active-site charge relay system residues include Glu-346 and His-468. Cys-430 and Cys-558 are oxidised to a cystine. Asn-486 and Asn-536 each carry an N-linked (GlcNAc...) asparagine glycan.

The protein belongs to the type-B carboxylesterase/lipase family. Oligomer composed of disulfide-linked homodimers.

It is found in the synapse. The protein localises to the secreted. It localises to the cell membrane. The enzyme catalyses acetylcholine + H2O = choline + acetate + H(+). Functionally, rapidly hydrolyzes choline released into the synapse. This is Acetylcholinesterase 1 (ace-1) from Caenorhabditis briggsae.